The primary structure comprises 483 residues: Phloretin 2'-O-glucosyltransferase (483 aa).

H15 functions as the Proton acceptor in the catalytic mechanism. An an anthocyanidin-binding site is contributed by H15. The active-site Charge relay is the D118. T140, A360, Q362, H377, W380, N381, S382, and E385 together coordinate UDP-alpha-D-glucose. A400 provides a ligand contact to an anthocyanidin. The UDP-alpha-D-glucose site is built by E401 and Q402.

It belongs to the UDP-glycosyltransferase family.

The enzyme catalyses phloretin + UDP-alpha-D-glucose = phlorizin + UDP + H(+). In terms of biological role, glycosyltransferase that possesses phloretin 2'-O-glycosyltransferase activity. Converts phloretin to phlorizin (phloretin 2'-O-glucoside), a potent antioxidant. Is specific for phloretin and does not possess glycosyltransferase activity toward naringenin, naringenin chalcone, eriodictyol, eriodictyol chalcone, apigenin, luteolin, kaempferol, quercetin, isoliquiritigenin, butein, caffeic acid, 2-coumaric acid, 3-coumaric acid, 3-hydroxybenzoic acid, 3,4-dihydroxybenzoic acid and 3,4-dihydroxyhydrocinnamic acid. Can glycosylate phloretin in the presence of UDP-glucose, UDP-xylose and UDP-galactose. The polypeptide is Phloretin 2'-O-glucosyltransferase (Pyrus communis (Pear)).